A 639-amino-acid polypeptide reads, in one-letter code: Methyl-accepting chemotaxis protein McpS (639 aa).

Residues 1 to 13 (MNSWFANISVNLK) lie on the Cytoplasmic side of the membrane. The helical transmembrane segment at 14–34 (LGLGFGLVLVLTGLLALTGWT) threads the bilayer. Residues 35–288 (SLGSLIDRSN…RDIESTQARS (254 aa)) are Periplasmic-facing. Residues 41 to 283 (DRSNWMGDIG…IQLERRDIES (243 aa)) form the HBM domain. Residue 60–65 (RIARLQ) coordinates (S)-malate. 60–65 (RIARLQ) contributes to the succinate binding site. 4 residues coordinate acetate: Asp-138, Arg-183, Arg-187, and Tyr-236. The stretch at 191-245 (AENSSANEQAALRQLDAALADTDNLKRQLPSEDARLQQFENAVLAYRDAVRQFRD) forms a coiled coil. Arg-254 and Thr-258 together coordinate (S)-malate. Arg-254 lines the succinate pocket. A helical membrane pass occupies residues 289 to 309 (LQAIATLLALLVGVLAAVLIT). One can recognise an HAMP domain in the interval 310–362 (RQITRPLQDTLVAVEKIASGDLTQHMRVTRRDELGVLQQGIARMGTTLRELIS). Topologically, residues 310–639 (RQITRPLQDT…LQTLVSQFRV (330 aa)) are cytoplasmic. The region spanning 367–603 (GVTQIASAAE…EISRSILNVR (237 aa)) is the Methyl-accepting transducer domain.

The protein belongs to the methyl-accepting chemotaxis (MCP) protein family. As to quaternary structure, homodimer. Exists as a mixture of monomers and dimers in solution. Ligand binding stabilizes the dimeric form. Post-translationally, methylated by CheR2.

The protein resides in the cell membrane. Binding of citrate to the ligand-binding domain reduces the chemotaxis towards the strong attractants such as malate and succinate. However, in physiologically relevant niches, citrate is mostly complexed with magnesium or calcium ions, and does not bind McpS. Chemotactic-signal transducers respond to changes in the concentration of attractants and repellents in the environment, transduce a signal from the outside to the inside of the cell, and facilitate sensory adaptation through the variation of the level of methylation. McpS is a specific chemoreceptor for 6 tricarboxylic acid (TCA) cycle intermediates (succinate, fumarate, malate, oxaloacetate, citrate and isocitrate), butyrate and acetate. Malate, succinate, fumarate and oxaloacetate cause the strongest chemotactic response. The polypeptide is Methyl-accepting chemotaxis protein McpS (mcpS) (Pseudomonas putida (strain ATCC 47054 / DSM 6125 / CFBP 8728 / NCIMB 11950 / KT2440)).